The primary structure comprises 498 residues: Calcium-dependent protein kinase 22 (498 aa).

G2 is lipidated: N-myristoyl glycine. In terms of domain architecture, Protein kinase spans 36-305; that stretch reads YSFGDELGKG…AADVLEHPWM (270 aa). Residues 42 to 50 and K65 contribute to the ATP site; that span reads LGKGNFGTT. D164 acts as the Proton acceptor in catalysis. The residue at position 204 (S204) is a Phosphoserine. Residues 309 to 339 form an autoinhibitory domain region; that stretch reads APDKPIDNVVLSRMKQFRAMNKLKKLALKVI. 4 consecutive EF-hand domains span residues 346–381, 382–417, 418–453, and 454–488; these read EEIK…HGSK, LSET…RHRL, ERDE…HGMG, and DEAN…GILQ. D359, D361, S363, S365, E370, D395, D397, N399, T401, E406, D431, D433, S435, H437, E442, D466, N468, D470, K472, and E477 together coordinate Ca(2+).

The protein belongs to the protein kinase superfamily. Ser/Thr protein kinase family. CDPK subfamily.

It is found in the membrane. The enzyme catalyses L-seryl-[protein] + ATP = O-phospho-L-seryl-[protein] + ADP + H(+). The catalysed reaction is L-threonyl-[protein] + ATP = O-phospho-L-threonyl-[protein] + ADP + H(+). Activated by calcium. Autophosphorylation may play an important role in the regulation of the kinase activity. Its function is as follows. May play a role in signal transduction pathways that involve calcium as a second messenger. In Arabidopsis thaliana (Mouse-ear cress), this protein is Calcium-dependent protein kinase 22 (CPK22).